The following is a 430-amino-acid chain: Tol-Pal system protein TolB (430 aa).

The N-terminal stretch at 1–21 is a signal peptide; it reads MKQALRVAFGFLILWASVLHA.

This sequence belongs to the TolB family. In terms of assembly, the Tol-Pal system is composed of five core proteins: the inner membrane proteins TolA, TolQ and TolR, the periplasmic protein TolB and the outer membrane protein Pal. They form a network linking the inner and outer membranes and the peptidoglycan layer.

The protein resides in the periplasm. Functionally, part of the Tol-Pal system, which plays a role in outer membrane invagination during cell division and is important for maintaining outer membrane integrity. TolB occupies a key intermediary position in the Tol-Pal system because it communicates directly with both membrane-embedded components, Pal in the outer membrane and TolA in the inner membrane. This Shigella flexneri serotype 5b (strain 8401) protein is Tol-Pal system protein TolB.